Here is a 764-residue protein sequence, read N- to C-terminus: Calpain-like protease palB/RIM13 (764 aa).

The Calpain catalytic domain maps to 95–368; sequence GEFYPPLTVY…FKYFYINWNP (274 aa). Catalysis depends on residues cysteine 165, histidine 318, and asparagine 336.

It belongs to the peptidase C2 family. PalB/RIM13 subfamily.

In terms of biological role, required for the proteolytic cleavage of the transcription factor RIM101 in response to alkaline ambient pH. This is Calpain-like protease palB/RIM13 from Debaryomyces hansenii (strain ATCC 36239 / CBS 767 / BCRC 21394 / JCM 1990 / NBRC 0083 / IGC 2968) (Yeast).